We begin with the raw amino-acid sequence, 399 residues long: O-glucosyltransferase rumi homolog (399 aa).

The signal sequence occupies residues 1–18 (MHFIIGIVICLSLSVIQS). Asn-19 and Asn-67 each carry an N-linked (GlcNAc...) asparagine glycan. Intrachain disulfides connect Cys-66-Cys-73, Cys-71-Cys-373, Cys-118-Cys-124, and Cys-277-Cys-300. Catalysis depends on Asp-149, which acts as the Proton donor/acceptor. The segment at 189-194 (AIALYP) is interaction with the consensus sequence C-X-S-X-[PA]-C in peptide substrates. Residues 224 to 228 (RGSRT), Arg-232, 271 to 273 (VTL), and 289 to 293 (AASFR) each bind UDP-alpha-D-glucose.

It belongs to the glycosyltransferase 90 family.

Its subcellular location is the endoplasmic reticulum lumen. The protein resides in the secreted. It functions in the pathway protein modification; protein glycosylation. In terms of biological role, protein O-glucosyltransferase. Catalyzes the reaction that attaches glucose through an O-glycosidic linkage to a conserved serine residue found in the consensus sequence C-X-S-X-[PA]-C in epidermal growth factor-like repeats. Regulates Notch signaling by glucosylating Notch in the ER, glucosylation is required for the correct folding and cleavage of Notch. In Anopheles gambiae (African malaria mosquito), this protein is O-glucosyltransferase rumi homolog.